Reading from the N-terminus, the 92-residue chain is Major allergen I polypeptide chain 1 (92 aa).

The N-terminal stretch at 1-22 (MKGACVLVLLWAALLLISGGNC) is a signal peptide.

The protein belongs to the secretoglobin family. In terms of assembly, heterotetramer composed of two non-covalently linked disulfide-linked heterodimer of chains 1 and 2. As to expression, saliva and sebaceous glands.

It is found in the secreted. This Felis catus (Cat) protein is Major allergen I polypeptide chain 1 (CH1).